The sequence spans 69 residues: UPF0346 protein YuiB (69 aa).

This sequence belongs to the UPF0346 family.

This Lactococcus lactis subsp. lactis (strain IL1403) (Streptococcus lactis) protein is UPF0346 protein YuiB (yuiB).